We begin with the raw amino-acid sequence, 873 residues long: Sister chromatid cohesion protein PDS5 homolog C (873 aa).

HEAT repeat units follow at residues 53–92, 99–136, 149–187, and 189–227; these read NALT…ITAP, DQMK…VAKV, ALLI…ESED, and PSEM…KLKT. Residues 266 to 301 show a composition bias toward basic and acidic residues; sequence NEKEDSQGHIKRETEVEKAAEISTPERTDAPKDESG. Disordered stretches follow at residues 266–611 and 658–873; these read NEKE…LVGS and SPLD…KRKR. Threonine 289 is modified (phosphothreonine). The span at 303 to 319 shows a compositional bias: polar residues; it reads SGVSNGVAQQNDSSVDT. A compositionally biased stretch (basic and acidic residues) spans 320–334; it reads DSMKKQDDTGAKDEP. The segment covering 336–348 has biased composition (polar residues); it reads QLDNPRNTDLNNT. Composition is skewed to basic and acidic residues over residues 349 to 365 and 373 to 394; these read TEEK…KENE and DLSK…DSKD. Polar residues-rich tracts occupy residues 400–411 and 418–438; these read PVDSSVTAATSS and SVQI…SSPS. Residues 456–466 show a composition bias toward basic and acidic residues; the sequence is KKKESSTEEVK. Residues 494–510 are compositionally biased toward low complexity; it reads KVASSSKTKPTVPPSKK. Basic and acidic residues-rich tracts occupy residues 511-526 and 535-555; these read STSE…KKVV and TKPK…EESL. Residues 661–681 are compositionally biased toward acidic residues; it reads DESELSQDEEAADQTGQEEDA. The segment covering 701–725 has biased composition (low complexity); it reads SSAKKGSGAGSSKAKATPASKSSKT. Over residues 726-746 the composition is skewed to basic and acidic residues; the sequence is SQDDKTASKSKDSKEASREEE. Residues 747-757 are compositionally biased toward acidic residues; sequence ASSEEESEEEE. 2 stretches are compositionally biased toward low complexity: residues 795–814 and 822–831; these read KATT…PAKS and KSGSASTPAS. Residues 844–853 show a composition bias toward basic and acidic residues; sequence ETPKEPEPAT. A compositionally biased stretch (low complexity) spans 854–866; it reads KAKSGKSQGSQSK.

Belongs to the PDS5 family. As to quaternary structure, interacts with the cohesin complex.

It localises to the nucleus. Functionally, cohesin cofactor dispensable during the meiotic division but playing an important role in DNA repair by homologous recombination (HR) probably by helping SMC5/SMC6 complex. Regulator of sister chromatid cohesion in mitosis which may stabilize cohesin complex association with chromatin. May couple sister chromatid cohesion during mitosis to DNA replication. Cohesion ensures that chromosome partitioning is accurate in both meiotic and mitotic cells and plays an important role in DNA repair. The chain is Sister chromatid cohesion protein PDS5 homolog C from Arabidopsis thaliana (Mouse-ear cress).